The sequence spans 37 residues: Cytochrome b6-f complex subunit 5 (37 aa).

The chain crosses the membrane as a helical span at residues 5–25 (LLSGIVLGLIPVTLAGLFVTA).

It belongs to the PetG family. As to quaternary structure, the 4 large subunits of the cytochrome b6-f complex are cytochrome b6, subunit IV (17 kDa polypeptide, PetD), cytochrome f and the Rieske protein, while the 4 small subunits are PetG, PetL, PetM and PetN. The complex functions as a dimer.

It is found in the plastid. It localises to the chloroplast thylakoid membrane. Component of the cytochrome b6-f complex, which mediates electron transfer between photosystem II (PSII) and photosystem I (PSI), cyclic electron flow around PSI, and state transitions. PetG is required for either the stability or assembly of the cytochrome b6-f complex. The protein is Cytochrome b6-f complex subunit 5 of Chlorokybus atmophyticus (Soil alga).